Here is a 250-residue protein sequence, read N- to C-terminus: Protein lin-28 homolog B (250 aa).

The interval 1-26 (MAEGGASKGGGEEPGKLPEPAEEESQ) is disordered. Residues 29 to 102 (RGTGHCKWFN…GLESIRVTGP (74 aa)) form the CSD domain. Serine 54, serine 96, serine 105, and serine 110 each carry phosphoserine. Positions 98-126 (RVTGPGGSPCLGSERRPKGKTLQKRKPKG) are disordered. A Bipartite nuclear localization signal motif is present at residues 112–125 (RRPKGKTLQKRKPK). The segment covering 114–125 (PKGKTLQKRKPK) has biased composition (basic residues). CCHC-type zinc fingers lie at residues 127 to 144 (DRCY…ECSL) and 149 to 166 (KKCH…NCPH). The Zn(2+) site is built by cysteine 129, cysteine 132, histidine 137, cysteine 142, cysteine 151, cysteine 154, histidine 159, and cysteine 164. The interval 169-250 (VAQPPASSQG…GPSVQKRKKT (82 aa)) is disordered. Over residues 173–191 (PASSQGRQEAESQPCTSTL) the composition is skewed to polar residues. Position 203 is a phosphoserine (serine 203). Basic and acidic residues predominate over residues 210 to 219 (ARAEISERSG). Residues 220–231 (RSPQEASSTKSS) show a composition bias toward polar residues. The short motif at 239-250 (KKGPSVQKRKKT) is the Nucleolar localization signal element.

This sequence belongs to the lin-28 family. Expressed at high levels in the placenta and, at mucher lower, in testis and fetal liver. Isoform 1 is only detected in placenta and in moderately and poorly differentiated hepatocellular carcinoma cells (at protein level). Isoform 2 is detected in fetal liver, non-tumor liver tissues, as well as well-differentiated tumor tissues (at protein level). Tends to be up-regulated in triple-negative (ER-,PR-,HER2-) breast tumors, as well as in liver, ovarian, and thyroid carcinomas.

It is found in the nucleus. It localises to the nucleolus. The protein localises to the cytoplasm. Its function is as follows. Suppressor of microRNA (miRNA) biogenesis, including that of let-7 and possibly of miR107, miR-143 and miR-200c. Binds primary let-7 transcripts (pri-let-7), including pri-let-7g and pri-let-7a-1, and sequester them in the nucleolus, away from the microprocessor complex, hence preventing their processing into mature miRNA. Does not act on pri-miR21. The repression of let-7 expression is required for normal development and contributes to maintain the pluripotent state of embryonic stem cells by preventing let-7-mediated differentiation. When overexpressed, recruits ZCCHC11/TUT4 uridylyltransferase to pre-let-7 transcripts, leading to their terminal uridylation and degradation. This activity might not be relevant in vivo, as LIN28B-mediated inhibition of let-7 miRNA maturation appears to be ZCCHC11-independent. Interaction with target pre-miRNAs occurs via an 5'-GGAG-3' motif in the pre-miRNA terminal loop. Mediates MYC-induced let-7 repression. When overexpressed, isoform 1 stimulates growth of the breast adenocarcinoma cell line MCF-7. Isoform 2 has no effect on cell growth. The polypeptide is Protein lin-28 homolog B (LIN28B) (Homo sapiens (Human)).